The primary structure comprises 208 residues: Imidazoleglycerol-phosphate dehydratase (208 aa).

It belongs to the imidazoleglycerol-phosphate dehydratase family.

It localises to the cytoplasm. The enzyme catalyses D-erythro-1-(imidazol-4-yl)glycerol 3-phosphate = 3-(imidazol-4-yl)-2-oxopropyl phosphate + H2O. It participates in amino-acid biosynthesis; L-histidine biosynthesis; L-histidine from 5-phospho-alpha-D-ribose 1-diphosphate: step 6/9. The polypeptide is Imidazoleglycerol-phosphate dehydratase (Anaeromyxobacter dehalogenans (strain 2CP-1 / ATCC BAA-258)).